We begin with the raw amino-acid sequence, 365 residues long: Keratin-associated protein 10-6 (365 aa).

29 consecutive repeat copies span residues Cys41 to Pro45, Cys46 to Ala50, Cys67 to Thr71, Cys89 to Ser93, Cys99 to Ser103, Cys109 to Val113, Cys114 to Val118, Cys119 to Val123, Cys124 to Val128, Cys129 to Ser133, Cys135 to Ser139, Cys145 to Ser149, Cys155 to Val159, Cys160 to Val164, Cys172 to Ser176, Cys186 to Val190, Cys208 to Ser212, Cys218 to Ser222, Cys228 to Val232, Cys233 to Val237, Cys238 to Thr242, Cys250 to Ser254, Cys260 to Ser264, Cys270 to Val274, Cys282 to Ser286, Cys292 to Ser296, Cys297 to Ser301, Cys316 to Val320, and Cys334 to Ala338. The tract at residues Cys41 to Ala338 is 29 X 5 AA repeats of C-C-X(3).

This sequence belongs to the KRTAP type 10 family. In terms of assembly, interacts with hair keratins. As to expression, restricted to a narrow region of the hair fiber cuticle, lying approximately 20 cell layers above the apex of the dermal papilla of the hair root; not detected in any other tissues.

Its function is as follows. In the hair cortex, hair keratin intermediate filaments are embedded in an interfilamentous matrix, consisting of hair keratin-associated proteins (KRTAP), which are essential for the formation of a rigid and resistant hair shaft through their extensive disulfide bond cross-linking with abundant cysteine residues of hair keratins. The matrix proteins include the high-sulfur and high-glycine-tyrosine keratins. The sequence is that of Keratin-associated protein 10-6 (KRTAP10-6) from Homo sapiens (Human).